The chain runs to 31 residues: Electron transfer flavoprotein-ubiquinone oxidoreductase (31 aa).

11–25 (VVIVGAGGAGLSAAI) provides a ligand contact to FAD.

In terms of assembly, monomer. [4Fe-4S] cluster is required as a cofactor. It depends on FAD as a cofactor.

It catalyses the reaction a ubiquinone + reduced [electron-transfer flavoprotein] = a ubiquinol + oxidized [electron-transfer flavoprotein] + H(+). Its function is as follows. Accepts electrons from ETF and reduces ubiquinone. This Paracoccus denitrificans protein is Electron transfer flavoprotein-ubiquinone oxidoreductase.